The primary structure comprises 312 residues: Ribose-phosphate pyrophosphokinase (312 aa).

ATP-binding positions include 34 to 36 (DLE) and 93 to 94 (RQ). Mg(2+)-binding residues include H127 and D168. K192 is a catalytic residue. D-ribose 5-phosphate contacts are provided by residues R194, D218, and 222-226 (DSAGT).

The protein belongs to the ribose-phosphate pyrophosphokinase family. Class I subfamily. As to quaternary structure, homohexamer. It depends on Mg(2+) as a cofactor.

The protein localises to the cytoplasm. The catalysed reaction is D-ribose 5-phosphate + ATP = 5-phospho-alpha-D-ribose 1-diphosphate + AMP + H(+). Its pathway is metabolic intermediate biosynthesis; 5-phospho-alpha-D-ribose 1-diphosphate biosynthesis; 5-phospho-alpha-D-ribose 1-diphosphate from D-ribose 5-phosphate (route I): step 1/1. Functionally, involved in the biosynthesis of the central metabolite phospho-alpha-D-ribosyl-1-pyrophosphate (PRPP) via the transfer of pyrophosphoryl group from ATP to 1-hydroxyl of ribose-5-phosphate (Rib-5-P). The protein is Ribose-phosphate pyrophosphokinase of Caulobacter vibrioides (strain ATCC 19089 / CIP 103742 / CB 15) (Caulobacter crescentus).